We begin with the raw amino-acid sequence, 471 residues long: Bifunctional protein GlmU (471 aa).

A pyrophosphorylase region spans residues 1 to 232 (MSDITAVLLA…EEDALAPNDR (232 aa)). UDP-N-acetyl-alpha-D-glucosamine-binding positions include 9 to 12 (LAAG), lysine 23, glutamine 73, 78 to 79 (GT), 102 to 104 (YGD), glycine 141, glutamate 157, and asparagine 230. Mg(2+) is bound at residue aspartate 104. Residue asparagine 230 participates in Mg(2+) binding. Positions 233 to 253 (VELARAEARLRRQINERHMRN) are linker. Residues 254–471 (GVTIINPDAT…RQRKMNREGT (218 aa)) are N-acetyltransferase. UDP-N-acetyl-alpha-D-glucosamine is bound by residues arginine 335 and lysine 353. The active-site Proton acceptor is the histidine 365. UDP-N-acetyl-alpha-D-glucosamine contacts are provided by tyrosine 368 and asparagine 379. Residues alanine 382, 388–389 (NY), alanine 425, and arginine 444 contribute to the acetyl-CoA site.

In the N-terminal section; belongs to the N-acetylglucosamine-1-phosphate uridyltransferase family. The protein in the C-terminal section; belongs to the transferase hexapeptide repeat family. In terms of assembly, homotrimer. Mg(2+) is required as a cofactor.

It localises to the cytoplasm. The enzyme catalyses alpha-D-glucosamine 1-phosphate + acetyl-CoA = N-acetyl-alpha-D-glucosamine 1-phosphate + CoA + H(+). It catalyses the reaction N-acetyl-alpha-D-glucosamine 1-phosphate + UTP + H(+) = UDP-N-acetyl-alpha-D-glucosamine + diphosphate. The protein operates within nucleotide-sugar biosynthesis; UDP-N-acetyl-alpha-D-glucosamine biosynthesis; N-acetyl-alpha-D-glucosamine 1-phosphate from alpha-D-glucosamine 6-phosphate (route II): step 2/2. It participates in nucleotide-sugar biosynthesis; UDP-N-acetyl-alpha-D-glucosamine biosynthesis; UDP-N-acetyl-alpha-D-glucosamine from N-acetyl-alpha-D-glucosamine 1-phosphate: step 1/1. It functions in the pathway bacterial outer membrane biogenesis; LPS lipid A biosynthesis. Catalyzes the last two sequential reactions in the de novo biosynthetic pathway for UDP-N-acetylglucosamine (UDP-GlcNAc). The C-terminal domain catalyzes the transfer of acetyl group from acetyl coenzyme A to glucosamine-1-phosphate (GlcN-1-P) to produce N-acetylglucosamine-1-phosphate (GlcNAc-1-P), which is converted into UDP-GlcNAc by the transfer of uridine 5-monophosphate (from uridine 5-triphosphate), a reaction catalyzed by the N-terminal domain. The polypeptide is Bifunctional protein GlmU (Symbiobacterium thermophilum (strain DSM 24528 / JCM 14929 / IAM 14863 / T)).